The primary structure comprises 542 residues: Prolyl 3-hydroxylase OGFOD1 (542 aa).

The Fe2OG dioxygenase domain occupies 134–239 (DLESTIDMSC…RLSISGWFHG (106 aa)). H155 and D157 together coordinate Fe cation. Position 169 (Y169) interacts with 2-oxoglutarate. H218 is a binding site for Fe cation. R230 serves as a coordination point for 2-oxoglutarate. The tract at residues 371-435 (SEDEPEDKKE…AKKESSVPTC (65 aa)) is disordered. Over residues 395–417 (SHSSSEPENSWAATSDSSLQSEG) the composition is skewed to polar residues.

The protein belongs to the TPA1 family. As to quaternary structure, monomer. Fe(2+) is required as a cofactor. L-ascorbate serves as cofactor.

The protein resides in the cytoplasm. It localises to the nucleus. The catalysed reaction is [ribosomal protein uS12]-L-proline + 2-oxoglutarate + O2 = [ribosomal protein uS12]-(3S)-3-hydroxy-L-proline + succinate + CO2. Its function is as follows. Prolyl 3-hydroxylase that catalyzes 3-hydroxylation of 'Pro-62' of small ribosomal subunit uS12 (RPS23), thereby regulating protein translation termination efficiency. Involved in stress granule formation. The sequence is that of Prolyl 3-hydroxylase OGFOD1 (OGFOD1) from Bos taurus (Bovine).